The chain runs to 485 residues: MGQLISFFGEIPTILQEALNIALIAVSIIATIKGVVNVWKSGLIQLLMFVMLAGRSCSVQIGHHLELEHIILNSSSILPFTPTLCKLNKTYFLVRGPFQAHWGVDLAIGSTTVAVENATKTYTLKSKNFTGCFEGNPDPDSAALLVTWLFNSLHHDYKNDPSILCERVSGENSFRFQINISEPEYCEKILSRMANLFGSFENYCLNNRHIKKLIIIRNLTWSQQCHENHMSAMQLITSNIHTQVVRARRILSFFTWSLSDAVGNDMPGGYCLEKWMLIASQLKCFGNTAVAKCNLNHDSEFCDMLRLFDFNRKAIETLQNKTRSQLNIAINAINSLISDNLLMKNRVKELMDIPFCNYTKFWYVNHTKLNHHSLPRCWLVKNGSYLNESEFRNDWLLESDHLISEILSREYEERQGRTPLSLVDVCFWSTLFYTASIFLHLIRIPTHRHIVGEGCPKPHRLRADSTCACGLYKQKRRPLKWVRSN.

Gly2 carries N-myristoyl glycine; by host lipidation. Over 2–17 (GQLISFFGEIPTILQE) the chain is Extracellular. A helical transmembrane segment spans residues 18–33 (ALNIALIAVSIIATIK). Residues 34-58 (GVVNVWKSGLIQLLMFVMLAGRSCS) lie on the Cytoplasmic side of the membrane. Cys57 contacts Zn(2+). At 59-424 (VQIGHHLELE…QGRTPLSLVD (366 aa)) the chain is on the extracellular side. 4 cysteine pairs are disulfide-bonded: Cys85/Cys225, Cys271/Cys284, Cys293/Cys302, and Cys356/Cys377. 4 N-linked (GlcNAc...) asparagine; by host glycosylation sites follow: Asn88, Asn128, Asn179, and Asn218. 4 N-linked (GlcNAc...) asparagine; by host glycosylation sites follow: Asn357, Asn365, Asn382, and Asn387. The helical transmembrane segment at 425–445 (VCFWSTLFYTASIFLHLIRIP) threads the bilayer. At 446–485 (THRHIVGEGCPKPHRLRADSTCACGLYKQKRRPLKWVRSN) the chain is on the cytoplasmic side. Residues His447, His449, Cys455, His459, Cys467, and Cys469 each contribute to the Zn(2+) site.

The protein belongs to the arenaviridae GPC protein family. In terms of assembly, interacts with glycoprotein G2. Part of the GP complex (GP-C) together with glycoprotein G1 and glycoprotein G2. The GP-complex interacts with protein Z, which interacts with ribonucleocapsid; these interactions may induce virion budding. Homotrimer; disulfide-linked. In pre-fusion state, G1 homotrimers bind G2 homotrimers via ionic interactions. Part of the GP complex (GP-C) together with glycoprotein G2 and the stable signal peptide. The GP-complex interacts with protein Z, which interacts with ribonucleocapsid; these interactions may induce virion budding. As to quaternary structure, homotrimer. Interacts with the stable signal peptide. In pre-fusion state, G2 homotrimers bind G1 homotrimers via ionic interactions. Part of the GP complex (GP-C) together with glycoprotein G1 and the stable signal peptide. Acidification in the endosome triggers rearrangements, which ultimately leads to a 6 helix bundle formed by the two heptad repeat domains (HR1 and HR2) in post-fusion state. The GP-complex interacts with protein Z, which interacts with ribonucleocapsid; these interactions may induce virion budding. Post-translationally, specific enzymatic cleavages in vivo yield mature proteins. GP-C polyprotein is cleaved in the endoplasmic reticulum by the host protease MBTPS1. Only cleaved glycoprotein is incorporated into virions. In terms of processing, the SSP remains stably associated with the GP complex following cleavage by signal peptidase and plays crucial roles in the trafficking of GP through the secretory pathway. Myristoylation is necessary for GP2-mediated fusion activity.

Its subcellular location is the virion membrane. It is found in the host endoplasmic reticulum membrane. The protein resides in the host Golgi apparatus membrane. The protein localises to the host cell membrane. Its function is as follows. Functions as a cleaved signal peptide that is retained as the third component of the GP complex (GP-C). Helps to stabilize the spike complex in its native conformation. The SSP is required for efficient glycoprotein expression, post-translational maturation cleavage of G1 and G2, glycoprotein transport to the cell surface plasma membrane, formation of infectious virus particles, and acid pH-dependent glycoprotein-mediated cell fusion. Forms the virion spikes together with glycoprotein G2. The glycoprotein spike trimers are connected to the underlying matrix. Interacts with the host receptor leading to virus endocytosis. In terms of biological role, forms the virion spikes together with glycoprotein G1. The glycoprotein spike trimers are connected to the underlying matrix. Class I viral fusion protein that directs fusion of viral and host endosomal membranes, leading to delivery of the nucleocapsid into the cytoplasm. Membrane fusion is mediated by irreversible conformational changes induced by acidification. This Sigmodon hispidus (Hispid cotton rat) protein is Pre-glycoprotein polyprotein GP complex.